The following is a 33-amino-acid chain: U13-ctenitoxin-Pn1c (33 aa).

3 cysteine pairs are disulfide-bonded: cysteine 3/cysteine 17, cysteine 10/cysteine 21, and cysteine 16/cysteine 30.

Expressed by the venom gland.

Its subcellular location is the secreted. Acts as a neurotoxin. The chain is U13-ctenitoxin-Pn1c from Phoneutria nigriventer (Brazilian armed spider).